A 156-amino-acid chain; its full sequence is uncharacterized protein (156 aa).

Residues 1–27 (MKLLVLRLILIISTIFVLLNLSCMVNG) form the signal peptide. Residues N20, N83, N103, N106, and N134 are each glycosylated (N-linked (GlcNAc...) asparagine).

It localises to the secreted. This is an uncharacterized protein from Dictyostelium discoideum (Social amoeba).